The primary structure comprises 174 residues: ATP-dependent protease subunit HslV (174 aa).

The active site involves Thr2. Positions 159, 162, and 165 each coordinate Na(+).

This sequence belongs to the peptidase T1B family. HslV subfamily. A double ring-shaped homohexamer of HslV is capped on each side by a ring-shaped HslU homohexamer. The assembly of the HslU/HslV complex is dependent on binding of ATP.

The protein localises to the cytoplasm. The catalysed reaction is ATP-dependent cleavage of peptide bonds with broad specificity.. Allosterically activated by HslU binding. In terms of biological role, protease subunit of a proteasome-like degradation complex believed to be a general protein degrading machinery. The protein is ATP-dependent protease subunit HslV of Lacticaseibacillus casei (strain BL23) (Lactobacillus casei).